The following is a 353-amino-acid chain: 2,4-diaminopentanoate dehydrogenase (353 aa).

The protein belongs to the DapB family. In terms of assembly, homodimer.

It carries out the reaction (2R,4S)-2,4-diaminopentanoate + NAD(+) + H2O = (2R)-2-amino-4-oxopentanoate + NH4(+) + NADH + H(+). The catalysed reaction is (2R,4S)-2,4-diaminopentanoate + NADP(+) + H2O = (2R)-2-amino-4-oxopentanoate + NH4(+) + NADPH + H(+). With respect to regulation, inhibited by p-chloromercuribenzoate, iodoacetate and N-ethylmaleimide. Its function is as follows. Involved in the ornithine fermentation pathway. Catalyzes the oxidative deamination of (2R,4S)-2,4-diaminopentanoate (DAP) to yield 2-amino-4-ketopentanoate (AKP). The sequence is that of 2,4-diaminopentanoate dehydrogenase from Acetoanaerobium sticklandii (strain ATCC 12662 / DSM 519 / JCM 1433 / CCUG 9281 / NCIMB 10654 / HF) (Clostridium sticklandii).